A 269-amino-acid polypeptide reads, in one-letter code: Interleukin-1 beta (269 aa).

Positions 1–112 (MAMVPEITCD…EEPITFKNCD (112 aa)) are excised as a propeptide.

The protein belongs to the IL-1 family. As to quaternary structure, monomer. In its precursor form, weakly interacts with full-length MEFV; the mature cytokine does not interact at all. Interacts with integrins ITGAV:ITGBV and ITGA5:ITGB1; integrin-binding is required for IL1B signaling. Interacts with cargo receptor TMED10; the interaction is direct and is required for the secretion of IL1B mature form. Interacts with HSP90AB1; the interaction facilitates cargo translocation into the ERGIC. Interacts with HSP90B1; the interaction facilitates cargo translocation into the ERGIC.

The protein localises to the cytoplasm. It is found in the cytosol. The protein resides in the secreted. It localises to the lysosome. Its subcellular location is the extracellular exosome. In terms of biological role, potent pro-inflammatory cytokine. Initially discovered as the major endogenous pyrogen, induces prostaglandin synthesis, neutrophil influx and activation, T-cell activation and cytokine production, B-cell activation and antibody production, and fibroblast proliferation and collagen production. Promotes Th17 differentiation of T-cells. Synergizes with IL12/interleukin-12 to induce IFNG synthesis from T-helper 1 (Th1) cells. Plays a role in angiogenesis by inducing VEGF production synergistically with TNF and IL6. Involved in transduction of inflammation downstream of pyroptosis: its mature form is specifically released in the extracellular milieu by passing through the gasdermin-D (GSDMD) pore. The polypeptide is Interleukin-1 beta (IL1B) (Trichosurus vulpecula (Brush-tailed possum)).